Reading from the N-terminus, the 447-residue chain is 3-phosphoshikimate 1-carboxyvinyltransferase (447 aa).

3-phosphoshikimate is bound by residues K25, S26, and R30. K25 provides a ligand contact to phosphoenolpyruvate. Residues G96 and R124 each coordinate phosphoenolpyruvate. Residues S171, S172, Q173, S203, D325, and K352 each contribute to the 3-phosphoshikimate site. Q173 is a binding site for phosphoenolpyruvate. D325 functions as the Proton acceptor in the catalytic mechanism. Positions 356, 400, and 425 each coordinate phosphoenolpyruvate.

Belongs to the EPSP synthase family. Monomer.

Its subcellular location is the cytoplasm. It catalyses the reaction 3-phosphoshikimate + phosphoenolpyruvate = 5-O-(1-carboxyvinyl)-3-phosphoshikimate + phosphate. The protein operates within metabolic intermediate biosynthesis; chorismate biosynthesis; chorismate from D-erythrose 4-phosphate and phosphoenolpyruvate: step 6/7. Functionally, catalyzes the transfer of the enolpyruvyl moiety of phosphoenolpyruvate (PEP) to the 5-hydroxyl of shikimate-3-phosphate (S3P) to produce enolpyruvyl shikimate-3-phosphate and inorganic phosphate. The protein is 3-phosphoshikimate 1-carboxyvinyltransferase of Bordetella petrii (strain ATCC BAA-461 / DSM 12804 / CCUG 43448).